The following is a 64-amino-acid chain: Conotoxin Am1.1 (64 aa).

Positions 1–22 (MSCLPVFVILLLLTASGPSVDA) are cleaved as a signal peptide. The propeptide occupies 23-49 (RLKTKDDVPLSSFRDNAKSTLRRLQDK). The residue at position 60 (P60) is a 4-hydroxyproline; partial; in major form.

This sequence belongs to the conotoxin T superfamily. In terms of processing, contains 2 disulfide bonds. As to expression, expressed by the venom duct.

The protein resides in the secreted. Its function is as follows. Probable toxin that inhibits ion channels. This is Conotoxin Am1.1 from Conus amadis (Amadis cone).